We begin with the raw amino-acid sequence, 374 residues long: MAIKVLVVDDSSFFRRRVSEIVNQDPELEVIATASNGAEAVKMTADLNPQVITMDIEMPVMDGITAVREIMAKCPTPILMFSSLTHDGAKATLDALDAGALDFLPKRFEDIATNKDEAILLLQQRVKALGRRRIFRPITRPSVAPVTPRPTTGSAVGNATTPVQSASAPVRSSPLSSIRASGKQYKLLLIGTSTGGPVALQKVLTQFPANYPHPILLIQHMPAAFTPAFASRLNGLCKIEVKEAANGDILRPGCAYLAPGGMQMMVERAGVTGRIKVLAGSAEMNYKPCVDITFASASKAYGGDVLAVVLTGMGADGREGARMLKAAGATIWAQDEASCVVYGMPQAVASTGIATQSISLDNMAESILKESARG.

In terms of domain architecture, Response regulatory spans 4–121 (KVLVVDDSSF…ATNKDEAILL (118 aa)). Asp-55 carries the 4-aspartylphosphate modification. Positions 141-170 (PSVAPVTPRPTTGSAVGNATTPVQSASAPV) are disordered. Over residues 149 to 167 (RPTTGSAVGNATTPVQSAS) the composition is skewed to polar residues. Positions 174-374 (PLSSIRASGK…ESILKESARG (201 aa)) constitute a CheB-type methylesterase domain. Residues Ser-193, His-220, and Asp-316 contribute to the active site.

This sequence belongs to the CheB family. Post-translationally, phosphorylated by CheA. Phosphorylation of the N-terminal regulatory domain activates the methylesterase activity.

It is found in the cytoplasm. It carries out the reaction [protein]-L-glutamate 5-O-methyl ester + H2O = L-glutamyl-[protein] + methanol + H(+). The catalysed reaction is L-glutaminyl-[protein] + H2O = L-glutamyl-[protein] + NH4(+). In terms of biological role, involved in chemotaxis. Part of a chemotaxis signal transduction system that modulates chemotaxis in response to various stimuli. Catalyzes the demethylation of specific methylglutamate residues introduced into the chemoreceptors (methyl-accepting chemotaxis proteins or MCP) by CheR. Also mediates the irreversible deamidation of specific glutamine residues to glutamic acid. This chain is Protein-glutamate methylesterase/protein-glutamine glutaminase 1, found in Shewanella oneidensis (strain ATCC 700550 / JCM 31522 / CIP 106686 / LMG 19005 / NCIMB 14063 / MR-1).